Here is a 44-residue protein sequence, read N- to C-terminus: Conotoxin Fi11.11 (44 aa).

Cystine bridges form between Cys1–Cys15, Cys8–Cys20, Cys14–Cys24, and Cys19–Cys28. An Asparagine amide modification is found at Asn30. Positions 35–44 are excised as a propeptide; the sequence is QVPLKSFGQR.

Belongs to the conotoxin I2 superfamily. In terms of tissue distribution, expressed by the venom duct.

It is found in the secreted. The protein is Conotoxin Fi11.11 of Conus figulinus (Fig cone).